A 250-amino-acid polypeptide reads, in one-letter code: Probable E3 ubiquitin-protein ligase RHY1A (250 aa).

Residues 1 to 10 show a composition bias toward polar residues; that stretch reads MTSASELFST. The segment at 1 to 106 is disordered; that stretch reads MTSASELFST…ETQSSSFVNL (106 aa). Basic residues predominate over residues 29 to 47; that stretch reads YRHHSHHHHRRHGVHHHNQ. Basic and acidic residues predominate over residues 48–58; sequence RHDSDGCDPLR. Positions 60 to 69 are enriched in basic residues; the sequence is PTPRLRRFFH. Residues 71–80 are compositionally biased toward basic and acidic residues; that stretch reads PIQERSRPIR. The span at 91 to 102 shows a compositional bias: low complexity; that stretch reads TDSTDTETQSSS. The segment at 203-244 adopts an RING-type; atypical zinc-finger fold; it reads CSICLESFTKGDMLISLPCTHSFHSSCLNPWLRACGDCPCCR.

It carries out the reaction S-ubiquitinyl-[E2 ubiquitin-conjugating enzyme]-L-cysteine + [acceptor protein]-L-lysine = [E2 ubiquitin-conjugating enzyme]-L-cysteine + N(6)-ubiquitinyl-[acceptor protein]-L-lysine.. It participates in protein modification; protein ubiquitination. Probable E3 ubiquitin-protein ligase that may possess E3 ubiquitin ligase activity in vitro. This is Probable E3 ubiquitin-protein ligase RHY1A from Arabidopsis thaliana (Mouse-ear cress).